Consider the following 344-residue polypeptide: Putative [LysW]-lysine/[LysW]-ornithine hydrolase (344 aa).

Histidine 66 is a binding site for Zn(2+). Aspartate 68 is an active-site residue. Aspartate 90 is a Zn(2+) binding site. Residue glutamate 117 is the Proton acceptor of the active site. Residues glutamate 118, glutamate 139, and histidine 297 each coordinate Zn(2+).

It belongs to the peptidase M20A family. LysK subfamily. It depends on Zn(2+) as a cofactor. Requires Co(2+) as cofactor.

The protein resides in the cytoplasm. The enzyme catalyses [amino-group carrier protein]-C-terminal-gamma-(L-lysyl)-L-glutamate + H2O = [amino-group carrier protein]-C-terminal-L-glutamate + L-lysine. It carries out the reaction [amino-group carrier protein]-C-terminal-gamma-(L-ornithyl)-L-glutamate + H2O = [amino-group carrier protein]-C-terminal-L-glutamate + L-ornithine. It participates in amino-acid biosynthesis; L-lysine biosynthesis via AAA pathway; L-lysine from L-alpha-aminoadipate (Thermus route): step 5/5. It functions in the pathway amino-acid biosynthesis; L-arginine biosynthesis. Its function is as follows. Catalyzes the release of L-lysine from [LysW]-gamma-L-lysine and the release of L-ornithine from [LysW]-L-ornithine. In Thermococcus kodakarensis (strain ATCC BAA-918 / JCM 12380 / KOD1) (Pyrococcus kodakaraensis (strain KOD1)), this protein is Putative [LysW]-lysine/[LysW]-ornithine hydrolase.